Here is a 28-residue protein sequence, read N- to C-terminus: uncharacterized protein (28 aa).

Residues 1-18 (MLPRKYKPAYKKQAHRVK) are compositionally biased toward basic residues. Positions 1–28 (MLPRKYKPAYKKQAHRVKSNPQPAYTFQ) are disordered. Residues 19–28 (SNPQPAYTFQ) are compositionally biased toward polar residues.

This is an uncharacterized protein from Saccharomyces cerevisiae (strain ATCC 204508 / S288c) (Baker's yeast).